A 129-amino-acid chain; its full sequence is MASFGERMSRAYWTMSMGMECYKASTSSESCQRRGVRDDTGTQPHGLVRPIPPEMPTTAHHRPVVVEGDRGPPRRPEKEPSTTTTKKKGPPTAATRTTSKKIVKNKASMDLAGTEKELEDECSFLFLEM.

The interval 23 to 101 (KASTSSESCQ…TAATRTTSKK (79 aa)) is disordered. 2 stretches are compositionally biased toward basic and acidic residues: residues 31–40 (CQRRGVRDDT) and 67–80 (EGDR…EKEP).

This is an uncharacterized protein from Ictaluridae (bullhead catfishes).